Consider the following 248-residue polypeptide: Transcription factor Spi-C (248 aa).

The ETS DNA-binding region spans 111–194; the sequence is LRLFEYLHES…IRRKLTYQFS (84 aa).

This sequence belongs to the ETS family. Binds DNA as a monomer.

Its subcellular location is the nucleus. In terms of biological role, controls the development of red pulp macrophages required for red blood cells recycling and iron homeostasis. Transcription factor that binds to the PU-box, a purine-rich DNA sequence (5'-GAGGA[AT]-3') that can act as a lymphoid-specific enhancer. Regulates VCAM1 gene expression. The chain is Transcription factor Spi-C (SPIC) from Bos taurus (Bovine).